The primary structure comprises 236 residues: Ubiquinone biosynthesis O-methyltransferase (236 aa).

S-adenosyl-L-methionine-binding residues include Arg-39, Gly-59, Asp-80, and Met-124.

The protein belongs to the methyltransferase superfamily. UbiG/COQ3 family.

The catalysed reaction is a 3-demethylubiquinol + S-adenosyl-L-methionine = a ubiquinol + S-adenosyl-L-homocysteine + H(+). It carries out the reaction a 3-(all-trans-polyprenyl)benzene-1,2-diol + S-adenosyl-L-methionine = a 2-methoxy-6-(all-trans-polyprenyl)phenol + S-adenosyl-L-homocysteine + H(+). It participates in cofactor biosynthesis; ubiquinone biosynthesis. In terms of biological role, O-methyltransferase that catalyzes the 2 O-methylation steps in the ubiquinone biosynthetic pathway. The chain is Ubiquinone biosynthesis O-methyltransferase from Shewanella sp. (strain W3-18-1).